The following is a 362-amino-acid chain: Hydroxycarboxylate dehydrogenase A (362 aa).

Residues Asp-173, His-257, and His-274 each coordinate Zn(2+).

The protein belongs to the iron-containing alcohol dehydrogenase family. Zn(2+) is required as a cofactor.

The enzyme catalyses 2-hydroxybutanoate + NADP(+) = 2-oxobutanoate + NADPH + H(+). It carries out the reaction 2-hydroxyglutarate + NADP(+) = 2-oxoglutarate + NADPH + H(+). Its function is as follows. Catalyzes the NADPH-dependent reduction of 2-oxoglutarate and 2-oxobutanoate, leading to the respective 2-hydroxycarboxylate. Cannot use NADH instead of NADPH as a redox partner. Do not catalyze the reverse reactions. In Escherichia coli (strain K12), this protein is Hydroxycarboxylate dehydrogenase A.